An 80-amino-acid chain; its full sequence is Exodeoxyribonuclease 7 small subunit (80 aa).

The protein belongs to the XseB family. In terms of assembly, heterooligomer composed of large and small subunits.

It is found in the cytoplasm. The catalysed reaction is Exonucleolytic cleavage in either 5'- to 3'- or 3'- to 5'-direction to yield nucleoside 5'-phosphates.. In terms of biological role, bidirectionally degrades single-stranded DNA into large acid-insoluble oligonucleotides, which are then degraded further into small acid-soluble oligonucleotides. This Rickettsia felis (strain ATCC VR-1525 / URRWXCal2) (Rickettsia azadi) protein is Exodeoxyribonuclease 7 small subunit.